Here is a 232-residue protein sequence, read N- to C-terminus: Large ribosomal subunit protein uL1 (232 aa).

The protein belongs to the universal ribosomal protein uL1 family. As to quaternary structure, part of the 50S ribosomal subunit.

Its function is as follows. Binds directly to 23S rRNA. The L1 stalk is quite mobile in the ribosome, and is involved in E site tRNA release. In terms of biological role, protein L1 is also a translational repressor protein, it controls the translation of the L11 operon by binding to its mRNA. This chain is Large ribosomal subunit protein uL1, found in Cereibacter sphaeroides (strain ATCC 17029 / ATH 2.4.9) (Rhodobacter sphaeroides).